Reading from the N-terminus, the 274-residue chain is S-methyl-5'-thioadenosine phosphorylase (274 aa).

Residues S20, 62–63 (RH), and 95–96 (SA) contribute to the phosphate site. M194 is a substrate binding site. Phosphate is bound at residue T195. 218–220 (DYD) contacts substrate.

It belongs to the PNP/MTAP phosphorylase family. MTAP subfamily. Homohexamer. Dimer of a homotrimer.

It carries out the reaction S-methyl-5'-thioadenosine + phosphate = 5-(methylsulfanyl)-alpha-D-ribose 1-phosphate + adenine. It functions in the pathway amino-acid biosynthesis; L-methionine biosynthesis via salvage pathway; S-methyl-5-thio-alpha-D-ribose 1-phosphate from S-methyl-5'-thioadenosine (phosphorylase route): step 1/1. Functionally, catalyzes the reversible phosphorylation of S-methyl-5'-thioadenosine (MTA) to adenine and 5-methylthioribose-1-phosphate. Involved in the breakdown of MTA, a major by-product of polyamine biosynthesis. Responsible for the first step in the methionine salvage pathway after MTA has been generated from S-adenosylmethionine. Has broad substrate specificity with 6-aminopurine nucleosides as preferred substrates. The chain is S-methyl-5'-thioadenosine phosphorylase from Hyperthermus butylicus (strain DSM 5456 / JCM 9403 / PLM1-5).